The following is a 301-amino-acid chain: Probable alpha-L-glutamate ligase (301 aa).

Positions 104–287 (LQLLSRRGIG…VAGMIIGYLE (184 aa)) constitute an ATP-grasp domain. ATP contacts are provided by residues Lys141, 178-179 (EY), Asp187, and 211-213 (RSN). Positions 248, 260, and 262 each coordinate Mg(2+). Mn(2+) contacts are provided by Asp248, Glu260, and Asn262.

It belongs to the RimK family. The cofactor is Mg(2+). Mn(2+) is required as a cofactor.

This chain is Probable alpha-L-glutamate ligase, found in Pseudomonas syringae pv. syringae (strain B728a).